The sequence spans 125 residues: Small ribosomal subunit protein uS12m (125 aa).

The interval 1–51 is disordered; sequence MPTKNQLIRHGREEKRRTDRTRALDQCPQKQGVCPRVSTRTPKKPNSAPRK. Over residues 10–23 the composition is skewed to basic and acidic residues; the sequence is HGREEKRRTDRTRA.

Belongs to the universal ribosomal protein uS12 family.

The protein resides in the mitochondrion. Protein S12 is involved in the translation initiation step. The protein is Small ribosomal subunit protein uS12m (RPS12) of Nicotiana sylvestris (Wood tobacco).